We begin with the raw amino-acid sequence, 212 residues long: Large ribosomal subunit protein uL3 (212 aa).

Residues 136 to 155 (THGNSLSHRSNGSIGQNQTP) are disordered. Gln-153 carries the post-translational modification N5-methylglutamine.

This sequence belongs to the universal ribosomal protein uL3 family. In terms of assembly, part of the 50S ribosomal subunit. Forms a cluster with proteins L14 and L19. Methylated by PrmB.

In terms of biological role, one of the primary rRNA binding proteins, it binds directly near the 3'-end of the 23S rRNA, where it nucleates assembly of the 50S subunit. The chain is Large ribosomal subunit protein uL3 from Shewanella baltica (strain OS223).